We begin with the raw amino-acid sequence, 829 residues long: Protein SEY1 (829 aa).

Residues 1-721 (MNQTPQIAQD…KRSMVSSVAQ (721 aa)) are Cytoplasmic-facing. Residues 87 to 310 (GFAYDVVAVF…REDYVFQPAY (224 aa)) form the GB1/RHD3-type G domain. 97-104 (GSQSTGKS) contributes to the GTP binding site. Residues 487–525 (EYEHELALLDEDLKLIADKCRADETKKMVNAIERNVKRQ) are a coiled coil. A helical membrane pass occupies residues 722 to 742 (IPVWMYGVLVVLGWNEAMAVL). The Lumenal segment spans residues 743-745 (FNP). A helical membrane pass occupies residues 746 to 766 (LYFAMLLVLAASGYIILQLGL). Topologically, residues 767 to 829 (AGPILQIAST…DLIKGEMLEK (63 aa)) are cytoplasmic. The disordered stretch occupies residues 806-829 (PVTASSSDEQERKGDLIKGEMLEK). Basic and acidic residues predominate over residues 814-829 (EQERKGDLIKGEMLEK).

It belongs to the TRAFAC class dynamin-like GTPase superfamily. GB1/RHD3 GTPase family. RHD3 subfamily.

The protein resides in the endoplasmic reticulum membrane. In terms of biological role, cooperates with the reticulon proteins and tubule-shaping DP1 family proteins to generate and maintain the structure of the tubular endoplasmic reticulum network. Has GTPase activity, which is required for its function in ER organization. The chain is Protein SEY1 from Cryptococcus neoformans var. neoformans serotype D (strain B-3501A) (Filobasidiella neoformans).